The chain runs to 149 residues: MGLEKSLILFPLLVLVLGWVQPSLARESPAMKFERQHMDSDGASSSSSTYCNQMMKRREMTKESCKPVNTFVHEPLADVQAVCSQENVTCKNGKQNCYKSTSALHITDCRLKDNSKYPNCDYKTSQYQKHIIVACEGNPYVPVHFDATV.

A signal peptide spans 1–25; sequence MGLEKSLILFPLLVLVLGWVQPSLA. K32 and R35 together coordinate substrate. Residue H37 is the Proton acceptor of the active site. Disulfide bonds link C51-C109, C65-C120, C83-C135, and C90-C97. Residues 66–70, K91, and R110 each bind substrate; that span reads KPVNT. The active-site Proton donor is H144.

This sequence belongs to the pancreatic ribonuclease family. In terms of assembly, monomer. Interacts with and forms tight 1:1 complexes with RNH1. Dimerization of two such complexes may occur. Interaction with RNH1 inhibits this protein. In terms of tissue distribution, pancreas.

It localises to the secreted. It carries out the reaction an [RNA] containing cytidine + H2O = an [RNA]-3'-cytidine-3'-phosphate + a 5'-hydroxy-ribonucleotide-3'-[RNA].. The enzyme catalyses an [RNA] containing uridine + H2O = an [RNA]-3'-uridine-3'-phosphate + a 5'-hydroxy-ribonucleotide-3'-[RNA].. In terms of biological role, endonuclease that catalyzes the cleavage of RNA on the 3' side of pyrimidine nucleotides. Acts on single-stranded and double-stranded RNA. This chain is Ribonuclease pancreatic (RNASE1), found in Uranomys ruddi (White-bellied brush-furred rat).